We begin with the raw amino-acid sequence, 501 residues long: Bifunctional purine biosynthesis protein PurH (501 aa).

Residues 1 to 144 enclose the MGS-like domain; it reads MKKRALISVF…KNFKDVVVLS (144 aa).

Belongs to the PurH family.

The enzyme catalyses (6R)-10-formyltetrahydrofolate + 5-amino-1-(5-phospho-beta-D-ribosyl)imidazole-4-carboxamide = 5-formamido-1-(5-phospho-D-ribosyl)imidazole-4-carboxamide + (6S)-5,6,7,8-tetrahydrofolate. The catalysed reaction is IMP + H2O = 5-formamido-1-(5-phospho-D-ribosyl)imidazole-4-carboxamide. It participates in purine metabolism; IMP biosynthesis via de novo pathway; 5-formamido-1-(5-phospho-D-ribosyl)imidazole-4-carboxamide from 5-amino-1-(5-phospho-D-ribosyl)imidazole-4-carboxamide (10-formyl THF route): step 1/1. The protein operates within purine metabolism; IMP biosynthesis via de novo pathway; IMP from 5-formamido-1-(5-phospho-D-ribosyl)imidazole-4-carboxamide: step 1/1. The chain is Bifunctional purine biosynthesis protein PurH from Clostridium perfringens (strain 13 / Type A).